Consider the following 185-residue polypeptide: Ribosome-recycling factor (185 aa).

The disordered stretch occupies residues 137 to 158 (NQVKKLEKDKEISEDESKKAQE). Residues 140–158 (KKLEKDKEISEDESKKAQE) are compositionally biased toward basic and acidic residues.

This sequence belongs to the RRF family.

The protein localises to the cytoplasm. Functionally, responsible for the release of ribosomes from messenger RNA at the termination of protein biosynthesis. May increase the efficiency of translation by recycling ribosomes from one round of translation to another. The polypeptide is Ribosome-recycling factor (Helicobacter pylori (strain P12)).